The primary structure comprises 432 residues: E3 ubiquitin-protein ligase ATL42 (432 aa).

An N-terminal signal peptide occupies residues 1–18 (MYQIFFFFLPLLHSYASA). Residues 37-57 (LAVVTGVLAIMFALTFVLLVY) traverse the membrane as a helical segment. Residues 123-165 (CSVCLSKFESVEILRLLPKCRHAFHIGCIDQWLEQHATCPLCR) form an RING-type; atypical zinc finger.

It belongs to the RING-type zinc finger family. ATL subfamily.

It localises to the membrane. It carries out the reaction S-ubiquitinyl-[E2 ubiquitin-conjugating enzyme]-L-cysteine + [acceptor protein]-L-lysine = [E2 ubiquitin-conjugating enzyme]-L-cysteine + N(6)-ubiquitinyl-[acceptor protein]-L-lysine.. Its pathway is protein modification; protein ubiquitination. Its function is as follows. E3 ubiquitin-protein ligase able to catalyze polyubiquitination with ubiquitin-conjugating enzyme E2 UBC8 in vitro. This Arabidopsis thaliana (Mouse-ear cress) protein is E3 ubiquitin-protein ligase ATL42 (ATL42).